The primary structure comprises 153 residues: Ribonuclease H (153 aa).

In terms of domain architecture, RNase H type-1 spans 1-141; it reads MKKIQLFTDG…CDDLARRAAE (141 aa). Mg(2+)-binding residues include aspartate 9, glutamate 47, aspartate 69, and aspartate 133.

Belongs to the RNase H family. In terms of assembly, monomer. It depends on Mg(2+) as a cofactor.

It localises to the cytoplasm. The enzyme catalyses Endonucleolytic cleavage to 5'-phosphomonoester.. Endonuclease that specifically degrades the RNA of RNA-DNA hybrids. This Psychromonas ingrahamii (strain DSM 17664 / CCUG 51855 / 37) protein is Ribonuclease H.